Consider the following 290-residue polypeptide: GTPase Era (290 aa).

The Era-type G domain occupies 2–168 (KVCIISILGR…IEILKEYAYN (167 aa)). The tract at residues 10–17 (GRPNVGKS) is G1. 10 to 17 (GRPNVGKS) contributes to the GTP binding site. The interval 36–40 (QTTRD) is G2. Residues 57 to 60 (DTPG) form a G3 region. Residues 57 to 61 (DTPGI) and 118 to 121 (SKID) contribute to the GTP site. Residues 118-121 (SKID) are G4. The G5 stretch occupies residues 147–149 (VSN). One can recognise a KH type-2 domain in the interval 199–275 (LTDELPHSIA…TLNLKVKVSN (77 aa)).

This sequence belongs to the TRAFAC class TrmE-Era-EngA-EngB-Septin-like GTPase superfamily. Era GTPase family. In terms of assembly, monomer.

It is found in the cytoplasm. The protein localises to the cell membrane. In terms of biological role, an essential GTPase that binds both GDP and GTP, with rapid nucleotide exchange. Plays a role in 16S rRNA processing and 30S ribosomal subunit biogenesis and possibly also in cell cycle regulation and energy metabolism. The polypeptide is GTPase Era (Mycoplasmopsis agalactiae (strain NCTC 10123 / CIP 59.7 / PG2) (Mycoplasma agalactiae)).